The sequence spans 474 residues: Glutamate--tRNA ligase (474 aa).

The 'HIGH' region motif lies at 10 to 20 (PSPTGYLHIGG). Cys107, Cys109, Cys134, and Asp136 together coordinate Zn(2+). The 'KMSKS' region signature appears at 244-248 (RLSKR). Lys247 serves as a coordination point for ATP.

The protein belongs to the class-I aminoacyl-tRNA synthetase family. Glutamate--tRNA ligase type 1 subfamily. Monomer. Zn(2+) is required as a cofactor.

The protein localises to the cytoplasm. The catalysed reaction is tRNA(Glu) + L-glutamate + ATP = L-glutamyl-tRNA(Glu) + AMP + diphosphate. Catalyzes the attachment of glutamate to tRNA(Glu) in a two-step reaction: glutamate is first activated by ATP to form Glu-AMP and then transferred to the acceptor end of tRNA(Glu). This chain is Glutamate--tRNA ligase, found in Anaeromyxobacter sp. (strain K).